A 981-amino-acid polypeptide reads, in one-letter code: RNA polymerase II assembly factor RTP1 (981 aa).

HEAT repeat units follow at residues 64 to 101, 161 to 199, 226 to 261, 366 to 403, 609 to 646, 655 to 692, 765 to 799, 800 to 836, and 945 to 980; these read SNNNEFVAVLLQKFQNLHIHVLEQQRRLIESKSDLLPI, DTLSQVITVFYNVLTSERSSDYLREIISKGSAYANILLG, YTLFGVYTLLVETIQDEKVREPILSKLTTLTLRRPE, KELNDVINVLISLSKNSSSDLLNDLVTSCPDEDGTTPG, KDVLIVIDQLIDVVQEKDETIQEVEADSDDEVEEGEET, SSYKIILQLLSTVLSESSSSILLQNSYILKSISRKLQS, ISLEKVLQIHLDYLKNMDPFIYLNVIKGLTTLCEL, EPETILPLLAEFYANKKKKNRLDDVLKVGEVFINYIQ, and EYNYDKLKTLLSYVRDQDEDYMVCEQIDKLLTVLDS. Acidic residues predominate over residues 630–651; it reads QEVEADSDDEVEEGEETEELDP. Positions 630–652 are disordered; the sequence is QEVEADSDDEVEEGEETEELDPN.

Belongs to the Tango6 family. As to quaternary structure, interacts with RNA polymerase II subunits RPB2 and RPB3. Interacts with the R2TP complex. Interacts with the nuclear pore complex subunits NUP100 and NUP116.

The protein resides in the cytoplasm. Required for the cytoplasmic assembly and the nuclear import of RNA polymerase II. May facilitate the starting interaction between RNA polymerase II subunits RPB2 and RPB3 and the subsequent interaction of the resulting complex with subunit RPB1. May also participate in the transport of RNA polymerase II through the nuclear pore complex. This chain is RNA polymerase II assembly factor RTP1, found in Saccharomyces cerevisiae (strain ATCC 204508 / S288c) (Baker's yeast).